Here is a 463-residue protein sequence, read N- to C-terminus: Probable Xaa-Pro aminopeptidase PEPP (463 aa).

Mn(2+)-binding residues include Asp-259, Asp-270, Glu-393, and Glu-433.

Belongs to the peptidase M24B family. Mn(2+) serves as cofactor.

It carries out the reaction Release of any N-terminal amino acid, including proline, that is linked to proline, even from a dipeptide or tripeptide.. Its function is as follows. Catalyzes the removal of a penultimate prolyl residue from the N-termini of peptides. The chain is Probable Xaa-Pro aminopeptidase PEPP (PEPP) from Phaeosphaeria nodorum (strain SN15 / ATCC MYA-4574 / FGSC 10173) (Glume blotch fungus).